A 106-amino-acid polypeptide reads, in one-letter code: UPF0060 membrane protein Csal_2746 (106 aa).

4 helical membrane passes run leucine 6–leucine 26, serine 31–leucine 51, valine 59–aspartate 79, and proline 85–tryptophan 105.

It belongs to the UPF0060 family.

The protein localises to the cell inner membrane. This chain is UPF0060 membrane protein Csal_2746, found in Chromohalobacter salexigens (strain ATCC BAA-138 / DSM 3043 / CIP 106854 / NCIMB 13768 / 1H11).